The primary structure comprises 664 residues: Threonine--tRNA ligase (664 aa).

Residues methionine 1–threonine 64 enclose the TGS domain. The interval aspartate 250–proline 559 is catalytic. Zn(2+)-binding residues include cysteine 355, histidine 406, and histidine 536.

Belongs to the class-II aminoacyl-tRNA synthetase family. Homodimer. It depends on Zn(2+) as a cofactor.

It is found in the cytoplasm. The catalysed reaction is tRNA(Thr) + L-threonine + ATP = L-threonyl-tRNA(Thr) + AMP + diphosphate + H(+). Catalyzes the attachment of threonine to tRNA(Thr) in a two-step reaction: L-threonine is first activated by ATP to form Thr-AMP and then transferred to the acceptor end of tRNA(Thr). Also edits incorrectly charged L-seryl-tRNA(Thr). The sequence is that of Threonine--tRNA ligase from Novosphingobium aromaticivorans (strain ATCC 700278 / DSM 12444 / CCUG 56034 / CIP 105152 / NBRC 16084 / F199).